Here is a 164-residue protein sequence, read N- to C-terminus: MALNLQDKKAIVAEVNEAASGALSAVVADSRGVPVAAMTVLRKQAREAGVYMKVVRNTLARRAVEGTEYECLTDTFTGPSLLAFSNEHPGAAARLFKDFAKENKDFEIKAAAFEGAVTDADVLATLPTYDEAIARLMMCMKEASAGKLVRTIAAVRDQKEEAAA.

The protein belongs to the universal ribosomal protein uL10 family. Part of the ribosomal stalk of the 50S ribosomal subunit. The N-terminus interacts with L11 and the large rRNA to form the base of the stalk. The C-terminus forms an elongated spine to which L12 dimers bind in a sequential fashion forming a multimeric L10(L12)X complex.

Forms part of the ribosomal stalk, playing a central role in the interaction of the ribosome with GTP-bound translation factors. In Aliivibrio fischeri (strain MJ11) (Vibrio fischeri), this protein is Large ribosomal subunit protein uL10.